The following is a 54-amino-acid chain: Relaxin (54 aa).

Pyrrolidone carboxylic acid is present on Q1. 3 cysteine pairs are disulfide-bonded: C10-C41, C22-C54, and C40-C45.

It belongs to the insulin family. Heterodimer of a B chain and an A chain linked by two disulfide bonds.

The protein localises to the secreted. Functionally, relaxin is an ovarian hormone that acts with estrogen to produce dilatation of the birth canal in many mammals. The chain is Relaxin from Balaenoptera edeni (Pigmy Bryde's whale).